The primary structure comprises 47 residues: Large ribosomal subunit protein bL34 (47 aa).

The protein belongs to the bacterial ribosomal protein bL34 family.

This is Large ribosomal subunit protein bL34 from Mycobacterium avium (strain 104).